We begin with the raw amino-acid sequence, 37 residues long: Large ribosomal subunit protein bL36 (37 aa).

The protein belongs to the bacterial ribosomal protein bL36 family.

The protein is Large ribosomal subunit protein bL36 of Staphylococcus saprophyticus subsp. saprophyticus (strain ATCC 15305 / DSM 20229 / NCIMB 8711 / NCTC 7292 / S-41).